Consider the following 125-residue polypeptide: Large ribosomal subunit protein bL12 (125 aa).

This sequence belongs to the bacterial ribosomal protein bL12 family. As to quaternary structure, homodimer. Part of the ribosomal stalk of the 50S ribosomal subunit. Forms a multimeric L10(L12)X complex, where L10 forms an elongated spine to which 2 to 4 L12 dimers bind in a sequential fashion. Binds GTP-bound translation factors.

Its function is as follows. Forms part of the ribosomal stalk which helps the ribosome interact with GTP-bound translation factors. Is thus essential for accurate translation. The protein is Large ribosomal subunit protein bL12 of Helicobacter pylori (strain HPAG1).